We begin with the raw amino-acid sequence, 755 residues long: Lysosome membrane protein 2-B (755 aa).

The Cytoplasmic segment spans residues 1-6 (MKHIGR). A helical membrane pass occupies residues 7 to 27 (IVSFPIGLVLIAVGIIIFVVV). N-linked (GlcNAc...) asparagine glycosylation is found at N28, N76, N379, N465, N497, N588, N607, and N680. At 28–727 (NRTIKDEFKK…AYKVDSFRYA (700 aa)) the chain is on the lumenal side. Residues 728 to 748 (ITVILIVVGGFLSLISGGLFV) form a helical membrane-spanning segment. At 749–755 (LDKIIDL) the chain is on the cytoplasmic side. A Di-leucine motif motif is present at residues 752–753 (II).

This sequence belongs to the CD36 family. Heavily glycosylated.

Its subcellular location is the lysosome membrane. Its function is as follows. May act as a lysosomal receptor. May be involved in macropinocytosis and fluid phase exocytosis. This is Lysosome membrane protein 2-B (lmpB) from Dictyostelium discoideum (Social amoeba).